Reading from the N-terminus, the 206-residue chain is Max dimerization protein 3 (206 aa).

The interaction with SIN3A and SIN3B stretch occupies residues 8 to 25 (IQVLLQAAEFLERREREA). Disordered stretches follow at residues 25–67 (AEHG…ELEK) and 146–171 (RERL…QEEL). The region spanning 57 to 109 (SGRSVHNELEKRRRAQLKRCLERLKQQMPLGADCARYTTLSLLRRARMHIQKL) is the bHLH domain.

Efficient DNA binding requires dimerization with another bHLH protein. Binds DNA as a heterodimer with MAX. Interacts with SIN3A AND SIN3B. Interacts with RNF17.

It localises to the nucleus. In terms of biological role, transcriptional repressor. Binds with MAX to form a sequence-specific DNA-binding protein complex which recognizes the core sequence 5'-CAC[GA]TG-3'. Antagonizes MYC transcriptional activity by competing for MAX and suppresses MYC dependent cell transformation. This is Max dimerization protein 3 (MXD3) from Homo sapiens (Human).